A 138-amino-acid chain; its full sequence is Phospholipase A2 homolog crotoxin acid subunit CA (138 aa).

Residues methionine 1–tyrosine 37 form the signal peptide. Disulfide bonds link cysteine 42-cysteine 131, cysteine 44-cysteine 60, cysteine 59-cysteine 111, cysteine 65-cysteine 138, cysteine 66-cysteine 104, cysteine 73-cysteine 97, cysteine 91-cysteine 102, and cysteine 131-cysteine 138. A propeptide spanning residues valine 79–tyrosine 82 is cleaved from the precursor. Pyrrolidone carboxylic acid is present on glutamine 84. Positions tyrosine 119 to leucine 124 are excised as a propeptide. Glutamine 125 carries the post-translational modification Pyrrolidone carboxylic acid.

The protein belongs to the phospholipase A2 family. Group II subfamily. D49 sub-subfamily. In terms of assembly, heterodimer of one of the acidic (CA1, CA2, CA3 or CA4) and one of the basic (CBa1, CBa2, CBb, CBc or CBd) subunits; non-covalently linked. The acidic subunit is non-toxic, without enzymatic activity and comprises 3 peptides that are cross-linked by 5 disulfide bridges. The basic subunit is toxic, has phospholipase A2 activity and is composed of a single chain. Multiple variants of each subunit give different crotoxin complexes that can be subdivided into 2 classes: (1) those of high toxicity, low PLA2 activity (CBb, CBc and CBd linked with high affinity to any CA) and high stability (K(d)=4.5 nM) and (2) those of moderate toxicity, high PLA2 activity (CBa2 linked with low affinity to any CA) and low stability (K(d)=25 nM). As to expression, expressed by the venom gland.

The protein localises to the secreted. Functionally, CAalpha-CAbeta-CAgamma: The acidic subunit of crotoxin (CA) is a heterotrimer of three disulfide-linked chains generated by post-translational maturation of a PLA2-like precursor. CA has no PLA2 activity and is not neurotoxic by itself, but plays several important functions in the crotoxin complex by increasing the lethal potency of the uncomplexed CB subunit. It acts by physically occluding the hydrophobic interfacial binding surface (IBS) of CB. This effect decreases the adsorption of CB to phospholipid membranes, targeting the crotoxin complex to reach the specific presynaptic receptor (R48) at the neuromuscular junction. It also prevents the formation of the reactive CB dimer. Moreover, the CA subunit inhibits the catalytic activity by partially masking the catalytic site of CB and inhibits its anticoagulant activity. Heterodimer CA-CB: Crotoxin is a potent presynaptic neurotoxin that possesses phospholipase A2 (PLA2) activity and exerts a lethal action by blocking neuromuscular transmission. It consists of a non-covalent association of a basic and weakly toxic PLA2 subunit (CBa2, CBb, CBc, or CBd), with a small acidic, non-enzymatic and non-toxic subunit (CA1, CA2, CA3 or CA4). The complex acts by binding to a specific 48-kDa protein (R48/CAPT) receptor located on presynaptic membranes, forming a transient ternary complex CA-CB-R48, followed by dissociation of the CA-CB complex and release of the CA subunit. At equilibrium, only the CB subunits remain associated with the specific crotoxin receptor. In addition to neurotoxicity, crotoxin has been found to exert myotoxicity, nephrotoxicity, and cardiovascular toxicity. Moreover, anti-inflammatory, immunomodulatory, anti-tumor and analgesic effects of crotoxin have also been reported. Its function is as follows. Found in the venom as a monomer and stabilized by one disulfide bond (Cys-131 and Cys-138). This peptide induces potent antinociceptive effects in acute and chronic pain models. This effect is mediated by the release of peripheral dynorphin A, an endogenous agonist of kappa-opioid receptors, and this release is dependent on cannabinoid receptor CB2 activation. The protein is Phospholipase A2 homolog crotoxin acid subunit CA of Crotalus durissus terrificus (South American rattlesnake).